The sequence spans 207 residues: High frequency lysogenization protein HflD homolog (207 aa).

This sequence belongs to the HflD family.

The protein resides in the cytoplasm. The protein localises to the cell inner membrane. The chain is High frequency lysogenization protein HflD homolog from Methylococcus capsulatus (strain ATCC 33009 / NCIMB 11132 / Bath).